The following is a 93-amino-acid chain: Cobalt transport protein CbiN (93 aa).

2 helical membrane passes run 5-25 (LMLLAMVVALVILPFFINHGG) and 63-83 (LLFTLQGSLGAAVIFYILGYC).

The protein belongs to the CbiN family. In terms of assembly, forms an energy-coupling factor (ECF) transporter complex composed of an ATP-binding protein (A component, CbiO), a transmembrane protein (T component, CbiQ) and 2 possible substrate-capture proteins (S components, CbiM and CbiN) of unknown stoichimetry.

It is found in the cell inner membrane. The protein operates within cofactor biosynthesis; adenosylcobalamin biosynthesis. Part of the energy-coupling factor (ECF) transporter complex CbiMNOQ involved in cobalt import. This is Cobalt transport protein CbiN from Salmonella gallinarum (strain 287/91 / NCTC 13346).